The following is a 261-amino-acid chain: UPF0246 protein Vapar_1301 (261 aa).

Belongs to the UPF0246 family.

In Variovorax paradoxus (strain S110), this protein is UPF0246 protein Vapar_1301.